The primary structure comprises 205 residues: Ypt/Rab-type GTPase avaA (205 aa).

Residues 17–23 (SGVGKTS), 33–40 (FSGSYKAT), Gly66, 125–128 (NKID), and 157–159 (SAK) each bind GTP. The Effector region motif lies at 37–45 (YKATIGADF). S-geranylgeranyl cysteine attachment occurs at residues Cys203 and Cys205. Cys205 bears the Cysteine methyl ester mark.

Belongs to the small GTPase superfamily. Rab family.

Its activity is regulated as follows. Rab activation is generally mediated by a guanine exchange factor (GEF), while inactivation through hydrolysis of bound GTP is catalyzed by a GTPase activating protein (GAP). Its function is as follows. Ypt/Rab-type GTPases are key regulators of membrane trafficking and intracellular vesicular transport. They act as molecular switches that convert between GTP-bound and GDP-bound states, and regulate virtually all steps of membrane traffic from the formation of the transport vesicle at the donor membrane to its fusion at the target membrane. In the GDP-bound state, Ypt proteins are predominantly cytosolic, solubilized through the interaction with a GDP dissociation inhibitor (GDI). In the GTP-bound state, the proteins are membrane bound and interact with specific effector proteins that select cargo, promote vesicle movement, or verify the correct site of fusion. AvaA functions in vacuolar biogenesis. This is Ypt/Rab-type GTPase avaA from Emericella nidulans (strain FGSC A4 / ATCC 38163 / CBS 112.46 / NRRL 194 / M139) (Aspergillus nidulans).